The chain runs to 361 residues: Peptide chain release factor 1 (361 aa).

N5-methylglutamine is present on Gln-236.

It belongs to the prokaryotic/mitochondrial release factor family. Methylated by PrmC. Methylation increases the termination efficiency of RF1.

The protein localises to the cytoplasm. In terms of biological role, peptide chain release factor 1 directs the termination of translation in response to the peptide chain termination codons UAG and UAA. This chain is Peptide chain release factor 1, found in Lactobacillus delbrueckii subsp. bulgaricus (strain ATCC BAA-365 / Lb-18).